A 362-amino-acid polypeptide reads, in one-letter code: tRNA N6-adenosine threonylcarbamoyltransferase (362 aa).

Residues His-120 and His-124 each coordinate Fe cation. Residues 142–146, Asp-175, Gly-188, and Asn-288 each bind substrate; that span reads LASGG. Asp-316 lines the Fe cation pocket. Residues 342-351 are compositionally biased toward basic and acidic residues; it reads RPRWPLDPDA. Residues 342–362 are disordered; it reads RPRWPLDPDAPKAAGAGGVKA.

Belongs to the KAE1 / TsaD family. The cofactor is Fe(2+).

The protein localises to the cytoplasm. The catalysed reaction is L-threonylcarbamoyladenylate + adenosine(37) in tRNA = N(6)-L-threonylcarbamoyladenosine(37) in tRNA + AMP + H(+). In terms of biological role, required for the formation of a threonylcarbamoyl group on adenosine at position 37 (t(6)A37) in tRNAs that read codons beginning with adenine. Is involved in the transfer of the threonylcarbamoyl moiety of threonylcarbamoyl-AMP (TC-AMP) to the N6 group of A37, together with TsaE and TsaB. TsaD likely plays a direct catalytic role in this reaction. This chain is tRNA N6-adenosine threonylcarbamoyltransferase, found in Rhodospirillum rubrum (strain ATCC 11170 / ATH 1.1.1 / DSM 467 / LMG 4362 / NCIMB 8255 / S1).